Reading from the N-terminus, the 482-residue chain is UDP-N-acetylmuramate--L-alanine ligase (482 aa).

Residue 123 to 129 (GTHGKTT) coordinates ATP.

The protein belongs to the MurCDEF family.

It localises to the cytoplasm. The catalysed reaction is UDP-N-acetyl-alpha-D-muramate + L-alanine + ATP = UDP-N-acetyl-alpha-D-muramoyl-L-alanine + ADP + phosphate + H(+). Its pathway is cell wall biogenesis; peptidoglycan biosynthesis. Its function is as follows. Cell wall formation. In Pseudomonas putida (strain ATCC 700007 / DSM 6899 / JCM 31910 / BCRC 17059 / LMG 24140 / F1), this protein is UDP-N-acetylmuramate--L-alanine ligase.